The chain runs to 413 residues: BSD domain-containing protein 1-A (413 aa).

The region spanning 146 to 198 is the BSD domain; that stretch reads WLAYWDPEQRKAEISELLVTSPSIRALFTKMVPAAVSHSEFWQRYFYKVHQLE. Basic and acidic residues-rich tracts occupy residues 208–219 and 255–271; these read KQRADQSVHSEE and HVED…RDHT. Disordered stretches follow at residues 208-228 and 255-386; these read KQRA…EEED and HVED…EFDM. The segment covering 274–287 has biased composition (low complexity); the sequence is TSPSESSESISPIT. The segment covering 297 to 322 has biased composition (polar residues); sequence QTPSKEPSPGTLTVTKENTGAGTDET. Residues 342–352 are compositionally biased toward basic and acidic residues; the sequence is QREDPPSDLRV. Residues 356–375 show a composition bias toward polar residues; sequence NSDSGKSTPSNNGQKGSSTD. Residues 376-386 are compositionally biased toward acidic residues; sequence ISEDWEKEFDM.

The protein is BSD domain-containing protein 1-A (bsdc1-a) of Xenopus laevis (African clawed frog).